Consider the following 467-residue polypeptide: UDP-N-acetylmuramate--L-alanine ligase (467 aa).

114–120 (GTHGKTT) is an ATP binding site.

The protein belongs to the MurCDEF family.

The protein resides in the cytoplasm. The catalysed reaction is UDP-N-acetyl-alpha-D-muramate + L-alanine + ATP = UDP-N-acetyl-alpha-D-muramoyl-L-alanine + ADP + phosphate + H(+). It participates in cell wall biogenesis; peptidoglycan biosynthesis. Cell wall formation. This chain is UDP-N-acetylmuramate--L-alanine ligase, found in Chlorobium chlorochromatii (strain CaD3).